The following is a 213-amino-acid chain: 3,4-dihydroxy-2-butanone 4-phosphate synthase (213 aa).

D-ribulose 5-phosphate-binding positions include 27–28 (RE), Asp-32, 140–144 (RTGHT), and Glu-164. Glu-28 is a Mg(2+) binding site. Residue His-143 coordinates Mg(2+).

It belongs to the DHBP synthase family. Homodimer. It depends on Mg(2+) as a cofactor. Mn(2+) is required as a cofactor.

The catalysed reaction is D-ribulose 5-phosphate = (2S)-2-hydroxy-3-oxobutyl phosphate + formate + H(+). The protein operates within cofactor biosynthesis; riboflavin biosynthesis; 2-hydroxy-3-oxobutyl phosphate from D-ribulose 5-phosphate: step 1/1. Functionally, catalyzes the conversion of D-ribulose 5-phosphate to formate and 3,4-dihydroxy-2-butanone 4-phosphate. This Agrobacterium fabrum (strain C58 / ATCC 33970) (Agrobacterium tumefaciens (strain C58)) protein is 3,4-dihydroxy-2-butanone 4-phosphate synthase.